A 109-amino-acid polypeptide reads, in one-letter code: Large ribosomal subunit protein uL22 (109 aa).

This sequence belongs to the universal ribosomal protein uL22 family. In terms of assembly, part of the 50S ribosomal subunit.

This protein binds specifically to 23S rRNA; its binding is stimulated by other ribosomal proteins, e.g. L4, L17, and L20. It is important during the early stages of 50S assembly. It makes multiple contacts with different domains of the 23S rRNA in the assembled 50S subunit and ribosome. Functionally, the globular domain of the protein is located near the polypeptide exit tunnel on the outside of the subunit, while an extended beta-hairpin is found that lines the wall of the exit tunnel in the center of the 70S ribosome. In Psychrobacter cryohalolentis (strain ATCC BAA-1226 / DSM 17306 / VKM B-2378 / K5), this protein is Large ribosomal subunit protein uL22.